A 188-amino-acid polypeptide reads, in one-letter code: dCTP deaminase (188 aa).

Residues 111–116 (KSTYAR), 135–137 (TLE), Q156, Y170, K179, and Q180 contribute to the dCTP site. E137 acts as the Proton donor/acceptor in catalysis.

Belongs to the dCTP deaminase family. Homotrimer.

The catalysed reaction is dCTP + H2O + H(+) = dUTP + NH4(+). The protein operates within pyrimidine metabolism; dUMP biosynthesis; dUMP from dCTP (dUTP route): step 1/2. Functionally, catalyzes the deamination of dCTP to dUTP. This chain is dCTP deaminase, found in Rickettsia bellii (strain OSU 85-389).